A 105-amino-acid chain; its full sequence is Large ribosomal subunit protein bL21c (105 aa).

Belongs to the bacterial ribosomal protein bL21 family. Part of the 50S ribosomal subunit.

It is found in the plastid. The protein resides in the chloroplast. In terms of biological role, this protein binds to 23S rRNA. In Trieres chinensis (Marine centric diatom), this protein is Large ribosomal subunit protein bL21c.